A 130-amino-acid chain; its full sequence is Chorion class B protein PC10 (130 aa).

The tract at residues 1 to 22 (GAWNGRLGCGCGGIAPAAELAA) is left arm. Positions 23-93 (SYGGGLGVAS…GNGALGITAE (71 aa)) are central domain. The interval 94-130 (RGYGAGIGYEGLGLGYGAGIGYKGYGLGGCGCGCGRL) is right arm (Gly-rich tandem repeats).

This sequence belongs to the chorion protein family.

Functionally, this protein is one of many from the eggshell of the silk moth. The sequence is that of Chorion class B protein PC10 from Antheraea polyphemus (Polyphemus moth).